The primary structure comprises 303 residues: tRNA dimethylallyltransferase 1 (303 aa).

An ATP-binding site is contributed by 9–16 (GPTASGKT). Position 11-16 (11-16 (TASGKT)) interacts with substrate. Interaction with substrate tRNA regions lie at residues 34–37 (DSAL), 158–162 (QRLIR), and 239–244 (RCVGYR).

This sequence belongs to the IPP transferase family. As to quaternary structure, monomer. It depends on Mg(2+) as a cofactor.

It carries out the reaction adenosine(37) in tRNA + dimethylallyl diphosphate = N(6)-dimethylallyladenosine(37) in tRNA + diphosphate. Its function is as follows. Catalyzes the transfer of a dimethylallyl group onto the adenine at position 37 in tRNAs that read codons beginning with uridine, leading to the formation of N6-(dimethylallyl)adenosine (i(6)A). The sequence is that of tRNA dimethylallyltransferase 1 from Shewanella sediminis (strain HAW-EB3).